The following is a 180-amino-acid chain: Inner membrane-spanning protein YciB (180 aa).

6 helical membrane passes run 4–24 (LLSE…GGGI), 25–45 (QHAT…CYVI), 49–69 (VSKL…ITLI), 76–96 (IKIK…MSGI), 118–138 (ITLS…NEVV), and 150–170 (FKVF…LPLL).

This sequence belongs to the YciB family.

It is found in the cell inner membrane. In terms of biological role, plays a role in cell envelope biogenesis, maintenance of cell envelope integrity and membrane homeostasis. This chain is Inner membrane-spanning protein YciB, found in Rickettsia africae (strain ESF-5).